Consider the following 356-residue polypeptide: tRNA N6-adenosine threonylcarbamoyltransferase (356 aa).

Residues His-124, His-128, and Tyr-145 each coordinate a divalent metal cation. Residues 145–149 (YVSGG), Asp-177, Gly-192, Glu-196, and Asn-287 each bind substrate. Asp-315 contributes to the a divalent metal cation binding site.

The protein belongs to the KAE1 / TsaD family. As to quaternary structure, component of the EKC/KEOPS complex composed of at least BUD32, CGI121, GON7, KAE1 and PCC1; the whole complex dimerizes. It depends on a divalent metal cation as a cofactor.

It is found in the cytoplasm. The protein localises to the nucleus. The enzyme catalyses L-threonylcarbamoyladenylate + adenosine(37) in tRNA = N(6)-L-threonylcarbamoyladenosine(37) in tRNA + AMP + H(+). Component of the EKC/KEOPS complex that is required for the formation of a threonylcarbamoyl group on adenosine at position 37 (t(6)A37) in tRNAs that read codons beginning with adenine. The complex is probably involved in the transfer of the threonylcarbamoyl moiety of threonylcarbamoyl-AMP (TC-AMP) to the N6 group of A37. KAE1 likely plays a direct catalytic role in this reaction, but requires other protein(s) of the complex to fulfill this activity. The EKC/KEOPS complex also promotes both telomere uncapping and telomere elongation. The complex is required for efficient recruitment of transcriptional coactivators. This chain is tRNA N6-adenosine threonylcarbamoyltransferase, found in Yarrowia lipolytica (strain CLIB 122 / E 150) (Yeast).